The chain runs to 37 residues: Photosystem II reaction center protein M (37 aa).

Residues 5–25 traverse the membrane as a helical segment; that stretch reads ILAFIATALFILVPTAFLLII.

The protein belongs to the PsbM family. As to quaternary structure, PSII is composed of 1 copy each of membrane proteins PsbA, PsbB, PsbC, PsbD, PsbE, PsbF, PsbH, PsbI, PsbJ, PsbK, PsbL, PsbM, PsbT, PsbX, PsbY, PsbZ, Psb30/Ycf12, at least 3 peripheral proteins of the oxygen-evolving complex and a large number of cofactors. It forms dimeric complexes.

The protein localises to the plastid. It is found in the chloroplast thylakoid membrane. One of the components of the core complex of photosystem II (PSII). PSII is a light-driven water:plastoquinone oxidoreductase that uses light energy to abstract electrons from H(2)O, generating O(2) and a proton gradient subsequently used for ATP formation. It consists of a core antenna complex that captures photons, and an electron transfer chain that converts photonic excitation into a charge separation. This subunit is found at the monomer-monomer interface. The protein is Photosystem II reaction center protein M of Pelargonium hortorum (Common geranium).